The primary structure comprises 379 residues: Lipid-A-disaccharide synthase (379 aa).

Belongs to the LpxB family.

It carries out the reaction a lipid X + a UDP-2-N,3-O-bis[(3R)-3-hydroxyacyl]-alpha-D-glucosamine = a lipid A disaccharide + UDP + H(+). It functions in the pathway bacterial outer membrane biogenesis; LPS lipid A biosynthesis. Condensation of UDP-2,3-diacylglucosamine and 2,3-diacylglucosamine-1-phosphate to form lipid A disaccharide, a precursor of lipid A, a phosphorylated glycolipid that anchors the lipopolysaccharide to the outer membrane of the cell. The chain is Lipid-A-disaccharide synthase from Vibrio cholerae serotype O1 (strain ATCC 39541 / Classical Ogawa 395 / O395).